Here is a 111-residue protein sequence, read N- to C-terminus: Probable 4-amino-4-deoxy-L-arabinose-phosphoundecaprenol flippase subunit ArnE (111 aa).

3 consecutive transmembrane segments (helical) span residues isoleucine 36–leucine 56, valine 61–alanine 81, and proline 88–glycine 108. The EamA domain occupies leucine 40–serine 109.

It belongs to the ArnE family. Heterodimer of ArnE and ArnF.

The protein localises to the cell inner membrane. The protein operates within bacterial outer membrane biogenesis; lipopolysaccharide biosynthesis. Functionally, translocates 4-amino-4-deoxy-L-arabinose-phosphoundecaprenol (alpha-L-Ara4N-phosphoundecaprenol) from the cytoplasmic to the periplasmic side of the inner membrane. The chain is Probable 4-amino-4-deoxy-L-arabinose-phosphoundecaprenol flippase subunit ArnE from Shigella flexneri.